The primary structure comprises 446 residues: Histidine--tRNA ligase (446 aa).

It belongs to the class-II aminoacyl-tRNA synthetase family. As to quaternary structure, homodimer.

It is found in the cytoplasm. The catalysed reaction is tRNA(His) + L-histidine + ATP = L-histidyl-tRNA(His) + AMP + diphosphate + H(+). This is Histidine--tRNA ligase from Paraburkholderia phymatum (strain DSM 17167 / CIP 108236 / LMG 21445 / STM815) (Burkholderia phymatum).